Reading from the N-terminus, the 493-residue chain is 3-octaprenyl-4-hydroxybenzoate carboxy-lyase (493 aa).

Asn172 provides a ligand contact to Mn(2+). Prenylated FMN contacts are provided by residues 175–177, 189–191, and 194–195; these read IYR, RWL, and RG. Glu238 is a binding site for Mn(2+). Asp287 serves as the catalytic Proton donor.

Belongs to the UbiD family. In terms of assembly, homohexamer. Requires prenylated FMN as cofactor. Mn(2+) serves as cofactor.

The protein localises to the cell membrane. The enzyme catalyses a 4-hydroxy-3-(all-trans-polyprenyl)benzoate + H(+) = a 2-(all-trans-polyprenyl)phenol + CO2. The protein operates within cofactor biosynthesis; ubiquinone biosynthesis. Catalyzes the decarboxylation of 3-octaprenyl-4-hydroxy benzoate to 2-octaprenylphenol, an intermediate step in ubiquinone biosynthesis. The protein is 3-octaprenyl-4-hydroxybenzoate carboxy-lyase of Shewanella frigidimarina (strain NCIMB 400).